The primary structure comprises 657 residues: Regulator of MON1-CCZ1 complex (657 aa).

The Mic1 domain maps to 471 to 637 (KKEMPHKFVI…NFTPGEHCEE (167 aa)).

Belongs to the RMC1 family. As to quaternary structure, found in a complex with RMC1, CCZ1 MON1A and MON1B.

The protein resides in the lysosome membrane. Its subcellular location is the late endosome membrane. Component of the CCZ1-MON1 RAB7A guanine exchange factor (GEF). Acts as a positive regulator of CCZ1-MON1A/B function necessary for endosomal/autophagic flux and efficient RAB7A localization. The polypeptide is Regulator of MON1-CCZ1 complex (Homo sapiens (Human)).